Consider the following 122-residue polypeptide: Large ribosomal subunit protein uL14 (122 aa).

This sequence belongs to the universal ribosomal protein uL14 family. Part of the 50S ribosomal subunit. Forms a cluster with proteins L3 and L19. In the 70S ribosome, L14 and L19 interact and together make contacts with the 16S rRNA in bridges B5 and B8.

Its function is as follows. Binds to 23S rRNA. Forms part of two intersubunit bridges in the 70S ribosome. The protein is Large ribosomal subunit protein uL14 of Psychromonas ingrahamii (strain DSM 17664 / CCUG 51855 / 37).